Reading from the N-terminus, the 283-residue chain is uncharacterized protein (283 aa).

An HTH rpiR-type domain is found at 3-79; it reads TGGLAIIQSM…MRVAGDLAKP (77 aa). Residues 39–58 constitute a DNA-binding region (H-T-H motif); that stretch reads VNEISALANSSDAAVIRLCK. The region spanning 123–264 is the SIS domain; sequence AVSLLLKAHT…FLGMAAEQYE (142 aa).

This is an uncharacterized protein from Bacillus subtilis (strain 168).